A 472-amino-acid polypeptide reads, in one-letter code: MRALLLFCFVASLLLSGQAEETEDVSEEVPMRDRSHIEKTLMLNEDKPTDDFSAVLQRLRKIYHSSIKPLEQSYKYNELRQHEITDGEITSKPMVLFLGPWSVGKSTMINYLLGLENTRYQLYTGAEPTTSEFTVLMHGPKLKTIEGIVMAADSARSFSPLEKFGQNFLEKLIGIEVPHKLLERVTFVDTPGIIENRKQQERGYPFNDVCQWFIDRADLIFVVFDPTKLDVGLELETLFRQLKGRESQIRIILNKADNLATQMLMRVYGALFWSLAPLINVTEPPRVYVSSFWPQEYKPDTHRELFLREEISLLEDLNQVIENRLENKIAFIRQHAIRVRIHALLVDRYLQTYKDKMTFFSDGELVFKDIVEDPDKFYIFKTILAKTNVSKFDLPNREAYKDFFGINPISSFKLLSQQCSYMGGCFLEKIERAITQELPSLLGSLGLGKNPGALNCDKTGCGETPKNRYKKH.

The first 19 residues, 1-19 (MRALLLFCFVASLLLSGQA), serve as a signal peptide directing secretion. The 242-residue stretch at 89–330 (ITSKPMVLFL…IENRLENKIA (242 aa)) folds into the Dynamin-type G domain. Residues 99-106 (GPWSVGKS) are G1 motif. Residue serine 102 is glycosylated (N-linked (GlcNAc...) asparagine). The tract at residues 127–128 (EP) is G2 motif. The interval 189 to 192 (DTPG) is G3 motif. Positions 254 to 257 (NKAD) are G4 motif. A region of interest (G5 motif) is located at residue proline 277. Residues asparagine 280 and asparagine 388 are each glycosylated (N-linked (GlcNAc...) asparagine).

Belongs to the TRAFAC class dynamin-like GTPase superfamily. Dynamin/Fzo/YdjA family. Post-translationally, N-glycosylated. In terms of tissue distribution, detected in skeletal muscle.

Its subcellular location is the sarcoplasmic reticulum lumen. The protein localises to the sarcoplasmic reticulum membrane. This Oryctolagus cuniculus (Rabbit) protein is Sarcalumenin (SRL).